Here is a 375-residue protein sequence, read N- to C-terminus: MDRDLNEDDSVVDLSFEAESPLAPPTELLERLPSYDWLLQGGRGQIFFPPLEAPGRPQEQRSWPSFLEHRVPAMTEEVAREALLSFVDSKCCYSSTVAGDLVIQELKRQTLCRYRLETFSESRISEWTFQPFTNHSVDGPQRGASPRLWDIKVQGPPMFQEDTRKFQVPHSSLVKECHKCHGRGRYKCSGCHGAGTVRCPSCCGAKRKAKQSRRCQLCAGSGRRRCSTCSGRGNKTCATCKGEKKLLHFIQLVIMWKNSLFEFVSEHRLNCPRELLAKAKGENLFKDENSVVYPIVDFPLRDISLASQRGIAEHSAALASRARVLQQRQTIELIPLTEVHYWYQGKTYVYYIYGTDHQVYAVDYPERYCCGCTIV.

In terms of tissue distribution, expressed in enterocytes of small and large intestinal mucosa (at protein level). Expressed in chromaffine and interstitial cells. Expressed in peripheral blood and gingival cells.

It is found in the cytoplasm. Its subcellular location is the nucleus. Plays a role in odontogenesis. The protein is Protein SSUH2 homolog of Homo sapiens (Human).